A 201-amino-acid polypeptide reads, in one-letter code: Recombination protein RecR (201 aa).

The segment at 60–75 (CRRCGNVDVCDPCTIC) adopts a C4-type zinc-finger fold. Residues 83–178 (RTLVVVADVG…RVTRLAQGVP (96 aa)) enclose the Toprim domain.

The protein belongs to the RecR family.

Functionally, may play a role in DNA repair. It seems to be involved in an RecBC-independent recombinational process of DNA repair. It may act with RecF and RecO. The sequence is that of Recombination protein RecR from Xanthobacter autotrophicus (strain ATCC BAA-1158 / Py2).